Reading from the N-terminus, the 274-residue chain is Diaminopimelate epimerase (274 aa).

Substrate contacts are provided by N11, Q44, and N64. Residue C73 is the Proton donor of the active site. Substrate is bound by residues 74–75 (GN), N157, N190, and 208–209 (ER). Catalysis depends on C217, which acts as the Proton acceptor. 218 to 219 (GS) lines the substrate pocket.

It belongs to the diaminopimelate epimerase family. As to quaternary structure, homodimer.

Its subcellular location is the cytoplasm. It carries out the reaction (2S,6S)-2,6-diaminopimelate = meso-2,6-diaminopimelate. It functions in the pathway amino-acid biosynthesis; L-lysine biosynthesis via DAP pathway; DL-2,6-diaminopimelate from LL-2,6-diaminopimelate: step 1/1. In terms of biological role, catalyzes the stereoinversion of LL-2,6-diaminopimelate (L,L-DAP) to meso-diaminopimelate (meso-DAP), a precursor of L-lysine and an essential component of the bacterial peptidoglycan. The sequence is that of Diaminopimelate epimerase from Cronobacter sakazakii (strain ATCC BAA-894) (Enterobacter sakazakii).